We begin with the raw amino-acid sequence, 277 residues long: Release factor glutamine methyltransferase (277 aa).

S-adenosyl-L-methionine contacts are provided by residues 117–121 (GTGTG), Asp-140, Trp-168, and Asn-183. Residue 183 to 186 (NPPY) coordinates substrate.

It belongs to the protein N5-glutamine methyltransferase family. PrmC subfamily.

The enzyme catalyses L-glutaminyl-[peptide chain release factor] + S-adenosyl-L-methionine = N(5)-methyl-L-glutaminyl-[peptide chain release factor] + S-adenosyl-L-homocysteine + H(+). Functionally, methylates the class 1 translation termination release factors RF1/PrfA and RF2/PrfB on the glutamine residue of the universally conserved GGQ motif. In Shigella flexneri, this protein is Release factor glutamine methyltransferase.